An 83-amino-acid polypeptide reads, in one-letter code: Large ribosomal subunit protein bL28 (83 aa).

The protein belongs to the bacterial ribosomal protein bL28 family.

The chain is Large ribosomal subunit protein bL28 from Amoebophilus asiaticus (strain 5a2).